A 377-amino-acid chain; its full sequence is Formate dehydrogenase, mitochondrial (377 aa).

The transit peptide at 1–29 directs the protein to the mitochondrion; that stretch reads MAAMWRAAARQLVDRAVGSRAAHTSAGSK. Substrate contacts are provided by I121 and N145. NAD(+)-binding positions include T146, D220, 255-259, N281, D307, and 331-334; these read PLTEK and HISG.

The protein belongs to the D-isomer specific 2-hydroxyacid dehydrogenase family. FDH subfamily. In terms of assembly, homodimer.

Its subcellular location is the mitochondrion. The catalysed reaction is formate + NAD(+) = CO2 + NADH. In terms of biological role, catalyzes the NAD(+)-dependent oxidation of formate to carbon dioxide. Involved in the cell stress response. In Hordeum vulgare (Barley), this protein is Formate dehydrogenase, mitochondrial.